The following is a 305-amino-acid chain: tRNA pseudouridine synthase B (305 aa).

Asp48 acts as the Nucleophile in catalysis.

It belongs to the pseudouridine synthase TruB family. Type 1 subfamily.

The enzyme catalyses uridine(55) in tRNA = pseudouridine(55) in tRNA. Responsible for synthesis of pseudouridine from uracil-55 in the psi GC loop of transfer RNAs. The sequence is that of tRNA pseudouridine synthase B from Pseudomonas syringae pv. syringae (strain B728a).